We begin with the raw amino-acid sequence, 901 residues long: HTH-type transcriptional regulator MalT (901 aa).

39-46 (SPAGYGKT) lines the ATP pocket. The 66-residue stretch at 829–894 (ELIRTSPLTQ…DAVQHAQQLL (66 aa)) folds into the HTH luxR-type domain. Residues 853–872 (NEQIAGELEVAATTIKTHIR) constitute a DNA-binding region (H-T-H motif).

This sequence belongs to the MalT family. Monomer in solution. Oligomerizes to an active state in the presence of the positive effectors ATP and maltotriose.

Activated by ATP and maltotriose, which are both required for DNA binding. Its function is as follows. Positively regulates the transcription of the maltose regulon whose gene products are responsible for uptake and catabolism of malto-oligosaccharides. Specifically binds to the promoter region of its target genes, recognizing a short DNA motif called the MalT box. The sequence is that of HTH-type transcriptional regulator MalT from Escherichia fergusonii (strain ATCC 35469 / DSM 13698 / CCUG 18766 / IAM 14443 / JCM 21226 / LMG 7866 / NBRC 102419 / NCTC 12128 / CDC 0568-73).